The following is a 509-amino-acid chain: ATP synthase subunit alpha (509 aa).

169–176 (GDRQTGKT) serves as a coordination point for ATP.

This sequence belongs to the ATPase alpha/beta chains family. F-type ATPases have 2 components, CF(1) - the catalytic core - and CF(0) - the membrane proton channel. CF(1) has five subunits: alpha(3), beta(3), gamma(1), delta(1), epsilon(1). CF(0) has three main subunits: a(1), b(2) and c(9-12). The alpha and beta chains form an alternating ring which encloses part of the gamma chain. CF(1) is attached to CF(0) by a central stalk formed by the gamma and epsilon chains, while a peripheral stalk is formed by the delta and b chains.

Its subcellular location is the cell inner membrane. The enzyme catalyses ATP + H2O + 4 H(+)(in) = ADP + phosphate + 5 H(+)(out). Produces ATP from ADP in the presence of a proton gradient across the membrane. The alpha chain is a regulatory subunit. The chain is ATP synthase subunit alpha from Mesorhizobium japonicum (strain LMG 29417 / CECT 9101 / MAFF 303099) (Mesorhizobium loti (strain MAFF 303099)).